Here is a 302-residue protein sequence, read N- to C-terminus: MQKFDIKTFQGLILTLQDYWARQGCTIVQPLDMEVGAGTSHPMTCLRALGPEPMATAYVQPSRRPTDGRYGENPNRLQHYYQFQVVIKPSPDNIQELYLGSLKALGLDPTVHDIRFVEDNWENPTLGAWGLGWEVWLNGMEVTQFTYFQQVGGLECKPVTGEITYGLERLAMYIQGVDSVYDLVWSDGPLGKTTYGDVFHQNEVEQSTYNFEYADVDFLFACFEQYEKEARMLLELEHPLPLPAYERILKAAHSFNLLDARKAISVTERQRYILRIRTLTKMVAEAYYASREALGFPMCKKD.

This sequence belongs to the class-II aminoacyl-tRNA synthetase family. Tetramer of two alpha and two beta subunits.

The protein localises to the cytoplasm. It catalyses the reaction tRNA(Gly) + glycine + ATP = glycyl-tRNA(Gly) + AMP + diphosphate. The protein is Glycine--tRNA ligase alpha subunit of Edwardsiella ictaluri (strain 93-146).